A 156-amino-acid polypeptide reads, in one-letter code: Small ribosomal subunit protein uS7 (156 aa).

It belongs to the universal ribosomal protein uS7 family. In terms of assembly, part of the 30S ribosomal subunit. Contacts proteins S9 and S11.

Functionally, one of the primary rRNA binding proteins, it binds directly to 16S rRNA where it nucleates assembly of the head domain of the 30S subunit. Is located at the subunit interface close to the decoding center, probably blocks exit of the E-site tRNA. This Hyphomonas neptunium (strain ATCC 15444) protein is Small ribosomal subunit protein uS7.